The sequence spans 407 residues: Indoleamine 2,3-dioxygenase 2 (407 aa).

Histidine 347 lines the heme pocket.

The protein belongs to the indoleamine 2,3-dioxygenase family. Heme serves as cofactor. Detected in liver, small intestine, spleen, placenta, thymus, lung, brain, kidney, and colon. Also expressed at low level in testis and thyroid. Not expressed in the majority of human tumor samples (&gt;99%).

The catalysed reaction is L-tryptophan + O2 = N-formyl-L-kynurenine. Its pathway is amino-acid degradation; L-tryptophan degradation via kynurenine pathway; L-kynurenine from L-tryptophan: step 1/2. Its activity is regulated as follows. Activity is inhibited by D-1MT (1-methyl-D-tryptophan) and MTH-trp (methylthiohydantoin-DL-tryptophan) but not L-1MT (1-methyl-L-tryptophan). In terms of biological role, catalyzes the first and rate limiting step of the catabolism of the essential amino acid tryptophan along the kynurenine pathway. Involved in immune regulation. May not play a significant role in tryptophan-related tumoral resistance. This chain is Indoleamine 2,3-dioxygenase 2, found in Homo sapiens (Human).